A 677-amino-acid polypeptide reads, in one-letter code: DNA ligase (677 aa).

NAD(+)-binding positions include 34–38, 83–84, and Glu117; these read DAEYD and SL. Residue Lys119 is the N6-AMP-lysine intermediate of the active site. Positions 140, 175, 283, and 307 each coordinate NAD(+). The Zn(2+) site is built by Cys401, Cys404, Cys419, and Cys425. Residues 594-677 form the BRCT domain; it reads SHLSLLHGKT…QYISPNTNEN (84 aa).

This sequence belongs to the NAD-dependent DNA ligase family. LigA subfamily. The cofactor is Mg(2+). Mn(2+) is required as a cofactor.

The catalysed reaction is NAD(+) + (deoxyribonucleotide)n-3'-hydroxyl + 5'-phospho-(deoxyribonucleotide)m = (deoxyribonucleotide)n+m + AMP + beta-nicotinamide D-nucleotide.. In terms of biological role, DNA ligase that catalyzes the formation of phosphodiester linkages between 5'-phosphoryl and 3'-hydroxyl groups in double-stranded DNA using NAD as a coenzyme and as the energy source for the reaction. It is essential for DNA replication and repair of damaged DNA. The protein is DNA ligase of Ehrlichia canis (strain Jake).